The sequence spans 2410 residues: Genome polyprotein 1 (2410 aa).

The tract at residues Met1–Glu21 is disordered. In terms of domain architecture, Helicase ATP-binding spans Ala474 to Glu632. Gly487 to Ser494 is a binding site for ATP. A DEAH box motif is present at residues Asp583–His586. Residues Gly647 to Phe813 enclose the Helicase C-terminal domain. Tyr1234 bears the O-(5'-phospho-RNA)-tyrosine mark. The 215-residue stretch at Ile1359–Phe1573 folds into the Peptidase C4 domain. Residues His1404, Asp1440, and Cys1507 each act as for nuclear inclusion protein A activity in the active site. A RdRp catalytic domain is found at Trp1857–Phe1980. The disordered stretch occupies residues Met2175 to Trp2200.

This sequence belongs to the bymoviruses polyprotein 1 family. In terms of processing, VPg is uridylylated by the polymerase and is covalently attached to the 5'-end of the genomic RNA. This uridylylated form acts as a nucleotide-peptide primer for the polymerase. The viral RNA1 of bymoviruses is expressed as a single polyprotein which undergoes post-translational proteolytic processing by the main proteinase NIa-pro resulting in the production of at least eight individual proteins.

The protein resides in the host cytoplasmic vesicle. It is found in the virion. It catalyses the reaction RNA(n) + a ribonucleoside 5'-triphosphate = RNA(n+1) + diphosphate. The enzyme catalyses Hydrolyzes glutaminyl bonds, and activity is further restricted by preferences for the amino acids in P6 - P1' that vary with the species of potyvirus, e.g. Glu-Xaa-Xaa-Tyr-Xaa-Gln-|-(Ser or Gly) for the enzyme from tobacco etch virus. The natural substrate is the viral polyprotein, but other proteins and oligopeptides containing the appropriate consensus sequence are also cleaved.. Its function is as follows. Indispensable for virus replication. Mediates the cap-independent, EIF4E-dependent translation of viral genomic RNAs. Binds to the cap-binding site of host EIF4E and thus interferes with the host EIF4E-dependent mRNA export and translation. VPg-RNA directly binds EIF4E and is a template for transcription. Also forms trimeric complexes with EIF4E-EIF4G, which are templates for translation. Functionally, has RNA-binding and proteolytic activities. In terms of biological role, an RNA-dependent RNA polymerase that plays an essential role in the virus replication. The chain is Genome polyprotein 1 from Hordeum vulgare (Barley).